Here is a 292-residue protein sequence, read N- to C-terminus: WRKY transcription factor 55 (292 aa).

The interval 133 to 155 is disordered; sequence VERSGASGSSTPRQRRRKDEGEE. The WRKY DNA-binding region spans 167-235; that stretch reads NTDLPPDDNH…YRGSHTCYNS (69 aa).

This sequence belongs to the WRKY group III family.

It is found in the nucleus. Its function is as follows. Transcription factor. Interacts specifically with the W box (5'-(T)TGAC[CT]-3'), a frequently occurring elicitor-responsive cis-acting element. In Arabidopsis thaliana (Mouse-ear cress), this protein is WRKY transcription factor 55 (WRKY55).